Reading from the N-terminus, the 105-residue chain is Thiosulfate sulfurtransferase GlpE (105 aa).

The Rhodanese domain maps to 15–103 (MQQGAILVDI…WCRAELPIDT (89 aa)). Cys63 acts as the Cysteine persulfide intermediate in catalysis.

Belongs to the GlpE family.

The protein resides in the cytoplasm. It carries out the reaction thiosulfate + hydrogen cyanide = thiocyanate + sulfite + 2 H(+). The catalysed reaction is thiosulfate + [thioredoxin]-dithiol = [thioredoxin]-disulfide + hydrogen sulfide + sulfite + 2 H(+). Functionally, transferase that catalyzes the transfer of sulfur from thiosulfate to thiophilic acceptors such as cyanide or dithiols. May function in a CysM-independent thiosulfate assimilation pathway by catalyzing the conversion of thiosulfate to sulfite, which can then be used for L-cysteine biosynthesis. The polypeptide is Thiosulfate sulfurtransferase GlpE (Haemophilus influenzae (strain 86-028NP)).